We begin with the raw amino-acid sequence, 395 residues long: Multidrug resistance protein MdtL (395 aa).

A run of 12 helical transmembrane segments spans residues 4-24, 42-62, 69-89, 93-113, 131-151, 158-178, 217-237, 247-267, 271-291, 295-315, 328-350, and 355-377; these read FLLC…MYLV, IAFS…GKIA, PVAI…SRAS, LFLS…VVAF, LLNG…HLIM, SLFY…LFIL, VSVI…VMGF, ALTA…LGLF, TLML…SLAH, VTLF…GVAM, VASS…LAAI, and AMNM…IFSV.

Belongs to the major facilitator superfamily. DHA1 family. MdtL (TC 2.A.1.2.22) subfamily.

It localises to the cell inner membrane. The polypeptide is Multidrug resistance protein MdtL (Salmonella newport (strain SL254)).